The chain runs to 1004 residues: 2-oxoglutarate dehydrogenase E1 component (1004 aa).

It belongs to the alpha-ketoglutarate dehydrogenase family. As to quaternary structure, homodimer. Part of the 2-oxoglutarate dehydrogenase (OGDH) complex composed of E1 (2-oxoglutarate dehydrogenase), E2 (dihydrolipoamide succinyltransferase) and E3 (dihydrolipoamide dehydrogenase); the complex contains multiple copies of the three enzymatic components (E1, E2 and E3). The cofactor is thiamine diphosphate.

It carries out the reaction N(6)-[(R)-lipoyl]-L-lysyl-[protein] + 2-oxoglutarate + H(+) = N(6)-[(R)-S(8)-succinyldihydrolipoyl]-L-lysyl-[protein] + CO2. In terms of biological role, E1 component of the 2-oxoglutarate dehydrogenase (OGDH) complex which catalyzes the decarboxylation of 2-oxoglutarate, the first step in the conversion of 2-oxoglutarate to succinyl-CoA and CO(2). This Brucella suis (strain ATCC 23445 / NCTC 10510) protein is 2-oxoglutarate dehydrogenase E1 component.